Consider the following 710-residue polypeptide: mRNA export factor crp79 (710 aa).

RRM domains follow at residues isoleucine 19–isoleucine 102 and histidine 222–proline 292. The span at glutamine 333–histidine 348 shows a compositional bias: polar residues. The disordered stretch occupies residues glutamine 333–lysine 357. Positions glutamate 401–phenylalanine 474 constitute an RRM 3 domain. Over residues threonine 502–lysine 524 the composition is skewed to polar residues. A disordered region spans residues threonine 502–glutamate 544. Residues valine 525–glutamate 538 are compositionally biased toward basic and acidic residues.

The protein localises to the cytoplasm. Its subcellular location is the nucleus. In terms of biological role, binds the poly(A) tail of mRNA. Involved in the export of mRNA from the nucleus to the cytoplasm. The sequence is that of mRNA export factor crp79 (crp79) from Schizosaccharomyces pombe (strain 972 / ATCC 24843) (Fission yeast).